Reading from the N-terminus, the 573-residue chain is uncharacterized protein (573 aa).

This is an uncharacterized protein from Treponema pallidum (strain Nichols).